The primary structure comprises 600 residues: Adenine deaminase 2 (600 aa).

The protein belongs to the metallo-dependent hydrolases superfamily. Adenine deaminase family. It depends on Mn(2+) as a cofactor.

It catalyses the reaction adenine + H2O + H(+) = hypoxanthine + NH4(+). In Bradyrhizobium sp. (strain ORS 278), this protein is Adenine deaminase 2.